A 459-amino-acid polypeptide reads, in one-letter code: MSSGRIVQIIGAVIDVEFPRDSVPSIYNALEVQSAAGTTLEVQQQLGDGVVRTIAMGSTEGLKRGLEVTDSGAAISVPVGKATLGRIMDVLGNPIDEAGPIATEERWGIHRPAPSFAEQAGGNDLLETGIKVIDLVCPFAKGGKVGLFGGAGVGKTVNMMELIRNIAIEHSGYSVFAGVGERTREGNDFYHEMKDSNVLDKVALVYGQMNEPPGNRLRVALTGLTMAEKFRDEGNDVLLFVDNIYRYTLAGTEVSALLGRMPSAVGYQPTLAEEMGTLQERITSTKNGSITSIQAVYVPADDLTDPSPATTFAHLDATVVLSRDIASLGIYPAVDPLDSTSRQLDPNVIGQEHYDTARGVQYVLQRYKELKDIIAILGMDELSETDKQLVNRARKIQRFLSQPFFVAEVFTGASGKYVSLKDTIAGFKGILNGDYDHLPEQAFYMVGGIEEAIEKAKKL.

149-156 (GGAGVGKT) provides a ligand contact to ATP.

It belongs to the ATPase alpha/beta chains family. In terms of assembly, F-type ATPases have 2 components, CF(1) - the catalytic core - and CF(0) - the membrane proton channel. CF(1) has five subunits: alpha(3), beta(3), gamma(1), delta(1), epsilon(1). CF(0) has three main subunits: a(1), b(2) and c(9-12). The alpha and beta chains form an alternating ring which encloses part of the gamma chain. CF(1) is attached to CF(0) by a central stalk formed by the gamma and epsilon chains, while a peripheral stalk is formed by the delta and b chains.

It is found in the cell inner membrane. It catalyses the reaction ATP + H2O + 4 H(+)(in) = ADP + phosphate + 5 H(+)(out). Functionally, produces ATP from ADP in the presence of a proton gradient across the membrane. The catalytic sites are hosted primarily by the beta subunits. This is ATP synthase subunit beta from Pseudomonas syringae pv. syringae (strain B728a).